We begin with the raw amino-acid sequence, 590 residues long: MMAPPSQVQGRLSSSMNKSLALLTVTLLLGGCQSLIHKTPDGTPPVEDTAVETKAKPEKYGSFSEDSLYSLLVAELAGQRNRFDIALSNYVVQAQKTRDPGVSERAFRIAEYLGADQEALDTSLLWARSAPDNLDAQRAAAIQLARAGRYEESMVYMEKVLNGQGDTHFDFLALSAAETDPDTRAGLLQSFDHLLKKYPNNGQLLFGKALLLQQDGRPDEALTLLEDNSASRHEVAPLLLRSRLLQSMKRSDEALPLLKAGIKEHPDDKRVRLAYARLLVEQNRLDDAKAEFAGLVQQFPDDDDLRFSLALVCLEAQAWDEARIYLEELVERDSHVDAAHFNLGRLAEEQKDTARALDEYAQVGPGNDFLPAQLRQTDVLLKAGRVDEAAQRLDKARSEQPDYAIQLYLIEAEALSNNDQQEKAWQAIQEGLKQYPEDLNLLYTRSMLAEKRNDLAQMEKDLRFVIAREPDNAMALNALGYTLADRTTRYGEARELILKAHKLNPDDPAILDSMGWINYRQGKLADAERYLRQALQRYPDHEVAAHLGEVLWAQGRQGDARAIWREYLDKQPDSDVLRRTIKRLTGAETP.

TPR repeat units follow at residues 235–268 (VAPLLLRSRLLQSMKRSDEALPLLKAGIKEHPDD), 269–302 (KRVRLAYARLLVEQNRLDDAKAEFAGLVQQFPDD), 370–403 (LPAQLRQTDVLLKAGRVDEAAQRLDKARSEQPDY), 405–438 (IQLYLIEAEALSNNDQQEKAWQAIQEGLKQYPED), and 508–541 (PAILDSMGWINYRQGKLADAERYLRQALQRYPDH).

This Pseudomonas aeruginosa (strain ATCC 15692 / DSM 22644 / CIP 104116 / JCM 14847 / LMG 12228 / 1C / PRS 101 / PAO1) protein is TPR repeat-containing protein PA4667.